The primary structure comprises 212 residues: Thymidylate kinase (212 aa).

7–14 (GIEGSGKS) contacts ATP.

It belongs to the thymidylate kinase family.

It catalyses the reaction dTMP + ATP = dTDP + ADP. Functionally, phosphorylation of dTMP to form dTDP in both de novo and salvage pathways of dTTP synthesis. The polypeptide is Thymidylate kinase (Oleidesulfovibrio alaskensis (strain ATCC BAA-1058 / DSM 17464 / G20) (Desulfovibrio alaskensis)).